Reading from the N-terminus, the 1673-residue chain is Protein TIC 214 (1673 aa).

A run of 6 helical transmembrane segments spans residues 18–38, 67–87, 90–110, 127–147, 175–195, and 218–238; these read IINS…FSIG, FITG…HLAL, PHTI…CNTH, LSIQ…HFIL, VGWI…VVWI, and SMSI…YYLG.

The protein belongs to the TIC214 family. Part of the Tic complex.

The protein localises to the plastid. Its subcellular location is the chloroplast inner membrane. In terms of biological role, involved in protein precursor import into chloroplasts. May be part of an intermediate translocation complex acting as a protein-conducting channel at the inner envelope. The chain is Protein TIC 214 from Lactuca sativa (Garden lettuce).